The following is a 138-amino-acid chain: MAKEYSRTQRVAQEMQKEIAIILQREIKDPRVGMATVSGVEVSRDLAYAKVFVTFLNDNTLEQVKTGVRALQDAAGFIHSLLGKAMRLRVVPELTFAYDNSLVEGMRMSNLVSQVVQNDRLRRSASPVDKTDREDKED.

Belongs to the RbfA family. In terms of assembly, monomer. Binds 30S ribosomal subunits, but not 50S ribosomal subunits or 70S ribosomes.

Its subcellular location is the cytoplasm. One of several proteins that assist in the late maturation steps of the functional core of the 30S ribosomal subunit. Associates with free 30S ribosomal subunits (but not with 30S subunits that are part of 70S ribosomes or polysomes). Required for efficient processing of 16S rRNA. May interact with the 5'-terminal helix region of 16S rRNA. In Sodalis glossinidius (strain morsitans), this protein is Ribosome-binding factor A.